The chain runs to 260 residues: 2-amino-3,7-dideoxy-D-threo-hept-6-ulosonate synthase 1 (260 aa).

The active-site Proton acceptor is the Asp-26. 1-deoxy-D-threo-hexo-2,5-diulose 6-phosphate-binding positions include 26–30 (DHGIT) and 144–146 (YPR). Tyr-144 acts as the Proton donor in catalysis. Lys-172 serves as the catalytic Schiff-base intermediate with substrate. 1-deoxy-D-threo-hexo-2,5-diulose 6-phosphate is bound by residues 194 to 195 (GG) and 221 to 222 (GR).

This sequence belongs to the DeoC/FbaB aldolase family. ADHS subfamily. As to quaternary structure, homodecamer.

It carries out the reaction 1-deoxy-D-threo-hexo-2,5-diulose 6-phosphate + L-aspartate 4-semialdehyde = 2,3-dioxopropyl phosphate + 2-amino-2,3,7-trideoxy-D-lyxo-hept-6-ulosonate. Functionally, catalyzes a transaldol reaction between 6-deoxy-5-ketofructose 1-phosphate (DKFP) and L-aspartate semialdehyde (ASA) with an elimination of hydroxypyruvaldehyde phosphate to yield 2-amino-3,7-dideoxy-D-threo-hept-6-ulosonate (ADH). Plays a key role in an alternative pathway of the biosynthesis of 3-dehydroquinate (DHQ), which is involved in the canonical pathway for the biosynthesis of aromatic amino acids. The sequence is that of 2-amino-3,7-dideoxy-D-threo-hept-6-ulosonate synthase 1 from Archaeoglobus fulgidus (strain ATCC 49558 / DSM 4304 / JCM 9628 / NBRC 100126 / VC-16).